The chain runs to 420 residues: Gamma-glutamyl phosphate reductase (420 aa).

It belongs to the gamma-glutamyl phosphate reductase family.

It localises to the cytoplasm. It catalyses the reaction L-glutamate 5-semialdehyde + phosphate + NADP(+) = L-glutamyl 5-phosphate + NADPH + H(+). It functions in the pathway amino-acid biosynthesis; L-proline biosynthesis; L-glutamate 5-semialdehyde from L-glutamate: step 2/2. Catalyzes the NADPH-dependent reduction of L-glutamate 5-phosphate into L-glutamate 5-semialdehyde and phosphate. The product spontaneously undergoes cyclization to form 1-pyrroline-5-carboxylate. The protein is Gamma-glutamyl phosphate reductase of Streptococcus pneumoniae (strain JJA).